Reading from the N-terminus, the 185-residue chain is Ribose 1,5-bisphosphate phosphokinase PhnN (185 aa).

10 to 17 (GPSGSGKD) contacts ATP.

This sequence belongs to the ribose 1,5-bisphosphokinase family.

It catalyses the reaction alpha-D-ribose 1,5-bisphosphate + ATP = 5-phospho-alpha-D-ribose 1-diphosphate + ADP. Its pathway is metabolic intermediate biosynthesis; 5-phospho-alpha-D-ribose 1-diphosphate biosynthesis; 5-phospho-alpha-D-ribose 1-diphosphate from D-ribose 5-phosphate (route II): step 3/3. In terms of biological role, catalyzes the phosphorylation of ribose 1,5-bisphosphate to 5-phospho-D-ribosyl alpha-1-diphosphate (PRPP). Accepts ATP but not GTP as a phosphoryl donor, and uses ribose 1,5-bisphosphate but not ribose, ribose 1-phosphate, or ribose 5-phosphate as a phosphoryl acceptor. In Escherichia coli (strain K12), this protein is Ribose 1,5-bisphosphate phosphokinase PhnN (phnN).